A 251-amino-acid chain; its full sequence is Aliphatic sulfonates import ATP-binding protein SsuB (251 aa).

An ABC transporter domain is found at 3–231; that stretch reads VSINEVSKYF…PRNKTSQSFQ (229 aa). Position 39 to 46 (39 to 46) interacts with ATP; it reads GPSGCGKS.

The protein belongs to the ABC transporter superfamily. Aliphatic sulfonates importer (TC 3.A.1.17.2) family. The complex is composed of two ATP-binding proteins (SsuB), two transmembrane proteins (SsuC) and a solute-binding protein (SsuA).

The protein resides in the cell membrane. It carries out the reaction ATP + H2O + aliphatic sulfonate-[sulfonate-binding protein]Side 1 = ADP + phosphate + aliphatic sulfonateSide 2 + [sulfonate-binding protein]Side 1.. Functionally, part of the ABC transporter complex SsuABC involved in aliphatic sulfonates import. Responsible for energy coupling to the transport system. In Bacillus anthracis, this protein is Aliphatic sulfonates import ATP-binding protein SsuB.